A 173-amino-acid polypeptide reads, in one-letter code: Copper transport protein ctr5 (173 aa).

Residues 1-54 are Extracellular-facing; that stretch reads MSLSKMSMSGMSGMGMGSSSNSSAATCRMSMLWNWYIHDSCFLAKSWHINTGNK. The helical transmembrane segment at 55–75 threads the bilayer; it reads FAGSIIGIFFFAVAIEGLSLV. Over 76 to 135 the chain is Cytoplasmic; it reads QRMFDRWIVAHSNGKTLSGPLRIFFPSSTVHVTVWQQLIRAAMYSSFYLSATILMLIVMS. A helical membrane pass occupies residues 136–156; the sequence is FNGYAILFGFVGAWIGFFLFA. At 157–173 the chain is on the extracellular side; sequence SDTYGTPSTGTGCCESR.

This sequence belongs to the copper transporter (Ctr) (TC 1.A.56) family. SLC31A subfamily. Interacts with ctr4.

It localises to the membrane. Functionally, required for high affinity copper (probably reduced Cu I) transport into the cell. This chain is Copper transport protein ctr5 (ctr5), found in Schizosaccharomyces pombe (strain 972 / ATCC 24843) (Fission yeast).